The sequence spans 88 residues: UPF0335 protein WD_0557 (88 aa).

The protein belongs to the UPF0335 family.

The chain is UPF0335 protein WD_0557 from Wolbachia pipientis wMel.